Here is a 102-residue protein sequence, read N- to C-terminus: ATP-dependent Clp protease adapter protein ClpS (102 aa).

This sequence belongs to the ClpS family. In terms of assembly, binds to the N-terminal domain of the chaperone ClpA.

In terms of biological role, involved in the modulation of the specificity of the ClpAP-mediated ATP-dependent protein degradation. The chain is ATP-dependent Clp protease adapter protein ClpS from Shewanella putrefaciens (strain CN-32 / ATCC BAA-453).